We begin with the raw amino-acid sequence, 320 residues long: Glyoxylate/hydroxypyruvate reductase B (320 aa).

Catalysis depends on residues Arg-233 and Glu-262. His-281 functions as the Proton donor in the catalytic mechanism.

It belongs to the D-isomer specific 2-hydroxyacid dehydrogenase family. GhrB subfamily. Homodimer.

Its subcellular location is the cytoplasm. It catalyses the reaction glycolate + NADP(+) = glyoxylate + NADPH + H(+). The enzyme catalyses (R)-glycerate + NAD(+) = 3-hydroxypyruvate + NADH + H(+). It carries out the reaction (R)-glycerate + NADP(+) = 3-hydroxypyruvate + NADPH + H(+). Functionally, catalyzes the NADPH-dependent reduction of glyoxylate and hydroxypyruvate into glycolate and glycerate, respectively. This chain is Glyoxylate/hydroxypyruvate reductase B, found in Pectobacterium carotovorum subsp. carotovorum (strain PC1).